The sequence spans 78 residues: Small ribosomal subunit protein bS16c (78 aa).

This sequence belongs to the bacterial ribosomal protein bS16 family.

It is found in the plastid. Its subcellular location is the chloroplast. The chain is Small ribosomal subunit protein bS16c from Panax ginseng (Korean ginseng).